Here is a 421-residue protein sequence, read N- to C-terminus: Ribulose bisphosphate carboxylase large chain (421 aa).

The substrate site is built by asparagine 68 and threonine 118. The active-site Proton acceptor is lysine 120. Residue lysine 122 participates in substrate binding. Residues lysine 146, aspartate 148, and glutamate 149 each contribute to the Mg(2+) site. Lysine 146 carries the N6-carboxylysine modification. Residue histidine 239 is the Proton acceptor of the active site. Residues arginine 240, histidine 272, and serine 324 each contribute to the substrate site.

It belongs to the RuBisCO large chain family. Type I subfamily. As to quaternary structure, heterohexadecamer of 8 large chains and 8 small chains; disulfide-linked. The disulfide link is formed within the large subunit homodimers. Requires Mg(2+) as cofactor. The disulfide bond which can form in the large chain dimeric partners within the hexadecamer appears to be associated with oxidative stress and protein turnover.

It localises to the plastid. The protein resides in the chloroplast. The enzyme catalyses 2 (2R)-3-phosphoglycerate + 2 H(+) = D-ribulose 1,5-bisphosphate + CO2 + H2O. The catalysed reaction is D-ribulose 1,5-bisphosphate + O2 = 2-phosphoglycolate + (2R)-3-phosphoglycerate + 2 H(+). Its function is as follows. RuBisCO catalyzes two reactions: the carboxylation of D-ribulose 1,5-bisphosphate, the primary event in carbon dioxide fixation, as well as the oxidative fragmentation of the pentose substrate in the photorespiration process. Both reactions occur simultaneously and in competition at the same active site. This Aegilops crassa (Persian goatgrass) protein is Ribulose bisphosphate carboxylase large chain (rbcL).